We begin with the raw amino-acid sequence, 92 residues long: Small ribosomal subunit protein uS19 (92 aa).

The protein belongs to the universal ribosomal protein uS19 family.

Functionally, protein S19 forms a complex with S13 that binds strongly to the 16S ribosomal RNA. This Aeromonas hydrophila subsp. hydrophila (strain ATCC 7966 / DSM 30187 / BCRC 13018 / CCUG 14551 / JCM 1027 / KCTC 2358 / NCIMB 9240 / NCTC 8049) protein is Small ribosomal subunit protein uS19.